The sequence spans 186 residues: PRA1 family protein G2 (186 aa).

A run of 4 helical transmembrane segments spans residues 66-86 (YFFV…LITA), 87-107 (SPVA…FHFF), 119-139 (VGDR…IWFT), and 142-162 (AVNL…HAVF).

The protein belongs to the PRA1 family. As to expression, expressed in roots and trichomes.

It localises to the endoplasmic reticulum membrane. Functionally, may be involved in both secretory and endocytic intracellular trafficking in the endosomal/prevacuolar compartments. This Arabidopsis thaliana (Mouse-ear cress) protein is PRA1 family protein G2 (PRA1G2).